The sequence spans 84 residues: U4-theraphotoxin-Hhn1a (84 aa).

The first 22 residues, 1–22, serve as a signal peptide directing secretion; sequence MKVTLIAILTRAAVLVLHTTAA. Residues 23 to 47 constitute a propeptide that is removed on maturation; that stretch reads EELEESQLMEVSMPDTELAAVDEER. 3 disulfide bridges follow: C51-C65, C55-C76, and C70-C81.

Belongs to the neurotoxin 12 (Hwtx-2) family. 02 (Hwtx-2) subfamily. As to expression, expressed by the venom gland.

Its subcellular location is the secreted. Postsynaptic neurotoxin. The sequence is that of U4-theraphotoxin-Hhn1a from Cyriopagopus hainanus (Chinese bird spider).